The following is a 66-amino-acid chain: uncharacterized protein (66 aa).

The next 2 membrane-spanning stretches (helical) occupy residues 3–23 (LIHV…PFAN) and 34–54 (FILA…AIVY).

It is found in the cell membrane. This is an uncharacterized protein from Bacillus subtilis (strain 168).